We begin with the raw amino-acid sequence, 330 residues long: MADEQQRRAQDGGSARDRHVPVMMERTLELLAPALSKGPAVVVDATLGMGGHSEALLAAHPELTLVGLDRDPDALRLAGERLAPHSDRVHLVHAVYDEWAEALAGLSLSKVDGALFDLGVSSLQLDETDRGFAYAHDAPLDMRMDSGAPRTAADVLNTYSAGELTRVLREYGEEKFAARIAAAIVRERAKAPFDRSGRLVELLYDAVPAASRRTGGHPAKRTFQALRIEVNAELEVLGRALPAALDSLAVGGRMVVMSYHSLEDRMVKRAFAERAKSKTPVDLPVELPGHGPEIRLLTRGAELASDAETAANPRAASVRLRAAERIKEAV.

Residues 50–52 (GGH), D69, L103, D117, and Q124 each bind S-adenosyl-L-methionine.

This sequence belongs to the methyltransferase superfamily. RsmH family.

It localises to the cytoplasm. The catalysed reaction is cytidine(1402) in 16S rRNA + S-adenosyl-L-methionine = N(4)-methylcytidine(1402) in 16S rRNA + S-adenosyl-L-homocysteine + H(+). Functionally, specifically methylates the N4 position of cytidine in position 1402 (C1402) of 16S rRNA. This chain is Ribosomal RNA small subunit methyltransferase H, found in Saccharopolyspora erythraea (strain ATCC 11635 / DSM 40517 / JCM 4748 / NBRC 13426 / NCIMB 8594 / NRRL 2338).